A 328-amino-acid polypeptide reads, in one-letter code: tRNA dimethylallyltransferase (328 aa).

25–32 (GPTAVGKT) contacts ATP. Residue 27-32 (TAVGKT) participates in substrate binding. Positions 50–53 (DSMQ) are interaction with substrate tRNA.

Belongs to the IPP transferase family. Monomer. Mg(2+) is required as a cofactor.

It catalyses the reaction adenosine(37) in tRNA + dimethylallyl diphosphate = N(6)-dimethylallyladenosine(37) in tRNA + diphosphate. Catalyzes the transfer of a dimethylallyl group onto the adenine at position 37 in tRNAs that read codons beginning with uridine, leading to the formation of N6-(dimethylallyl)adenosine (i(6)A). The chain is tRNA dimethylallyltransferase from Halothermothrix orenii (strain H 168 / OCM 544 / DSM 9562).